Consider the following 248-residue polypeptide: tRNA pseudouridine synthase A (248 aa).

Asp53 functions as the Nucleophile in the catalytic mechanism. Tyr111 provides a ligand contact to substrate.

It belongs to the tRNA pseudouridine synthase TruA family. As to quaternary structure, homodimer.

The catalysed reaction is uridine(38/39/40) in tRNA = pseudouridine(38/39/40) in tRNA. Functionally, formation of pseudouridine at positions 38, 39 and 40 in the anticodon stem and loop of transfer RNAs. This is tRNA pseudouridine synthase A from Listeria monocytogenes serotype 4b (strain CLIP80459).